Reading from the N-terminus, the 237-residue chain is Ribonuclease 3 (237 aa).

The 127-residue stretch at 8–134 (RSALLEKLGV…VIGAVYLDAG (127 aa)) folds into the RNase III domain. Glutamate 47 is a Mg(2+) binding site. Aspartate 51 is a catalytic residue. Residues aspartate 120 and glutamate 123 each coordinate Mg(2+). The active site involves glutamate 123. The 69-residue stretch at 161–229 (DPKTSLQEAA…ALSAWTALTN (69 aa)) folds into the DRBM domain.

The protein belongs to the ribonuclease III family. In terms of assembly, homodimer. Mg(2+) serves as cofactor.

It localises to the cytoplasm. It catalyses the reaction Endonucleolytic cleavage to 5'-phosphomonoester.. Functionally, digests double-stranded RNA. Involved in the processing of primary rRNA transcript to yield the immediate precursors to the large and small rRNAs (23S and 16S). Processes some mRNAs, and tRNAs when they are encoded in the rRNA operon. Processes pre-crRNA and tracrRNA of type II CRISPR loci if present in the organism. The chain is Ribonuclease 3 from Leifsonia xyli subsp. xyli (strain CTCB07).